The primary structure comprises 202 residues: Vitelline membrane outer layer protein 1 homolog (202 aa).

A signal peptide spans 1–24; it reads MERGAGAKLLPLLLLLRATGFTCA. Cystine bridges form between Cys-53–Cys-86, Cys-114–Cys-146, Cys-169–Cys-199, and Cys-174–Cys-200.

This sequence belongs to the VMO1 family.

It localises to the secreted. This chain is Vitelline membrane outer layer protein 1 homolog (VMO1), found in Homo sapiens (Human).